The following is a 434-amino-acid chain: Histidine--tRNA ligase (434 aa).

A disordered region spans residues 412–434; that stretch reads DQTTVPVEAFPGDHDAPTYEDVV.

It belongs to the class-II aminoacyl-tRNA synthetase family.

It is found in the cytoplasm. It catalyses the reaction tRNA(His) + L-histidine + ATP = L-histidyl-tRNA(His) + AMP + diphosphate + H(+). This is Histidine--tRNA ligase from Haloquadratum walsbyi (strain DSM 16790 / HBSQ001).